A 276-amino-acid chain; its full sequence is Type 2 phosphatidylinositol 4,5-bisphosphate 4-phosphatase (276 aa).

The span at 1–10 (MAADGIDERS) shows a compositional bias: basic and acidic residues. Residues 1–27 (MAADGIDERSPLISPSSGNVTPTAPPY) are disordered. A compositionally biased stretch (polar residues) spans 13-27 (ISPSSGNVTPTAPPY). Residue Cys106 is part of the active site. Residues 106–112 (CKDISRR) carry the CX5R motif motif. The next 2 helical transmembrane spans lie at 211-231 (CCTYITMGMICIFIGVGLTVG) and 246-266 (WAVAYLVGLVCLIRACYWGAI).

The protein resides in the late endosome membrane. It localises to the lysosome membrane. The enzyme catalyses a 1,2-diacyl-sn-glycero-3-phospho-(1D-myo-inositol-4,5-bisphosphate) + H2O = a 1,2-diacyl-sn-glycero-3-phospho-(1D-myo-inositol-5-phosphate) + phosphate. Catalyzes the hydrolysis of phosphatidylinositol-4,5-bisphosphate (PtdIns-4,5-P2) to phosphatidylinositol-4-phosphate (PtdIns-4-P). The chain is Type 2 phosphatidylinositol 4,5-bisphosphate 4-phosphatase (pip4p2) from Xenopus tropicalis (Western clawed frog).